The sequence spans 346 residues: Prepilin peptidase EppA (346 aa).

10 consecutive transmembrane segments (helical) span residues 1–21, 31–51, 56–76, 77–97, 101–121, 128–148, 149–169, 182–202, 206–226, and 321–341; these read MFGF…LILT, IIPH…GYYF, AITS…GMGG, GDVK…IYFV, ISIL…TKIL, IIPS…ITEI, YSIG…IFIS, LGYI…AYFV, VLIS…VIYA, and PFVP…MGVI.

The protein belongs to the peptidase A24 family.

It is found in the cell membrane. Peptidase that processes the N-terminus of prepilins. Specifically cleaves proteins with a class III (type IV pilin-like) signal sequence, such as the major structural pilin EpdE and the minor pilins EpdA, EpdC and EpdD. Is not able to cleave the preflagellin subunit FlaB2. This chain is Prepilin peptidase EppA, found in Methanococcus maripaludis (strain DSM 14266 / JCM 13030 / NBRC 101832 / S2 / LL).